A 200-amino-acid polypeptide reads, in one-letter code: Ribosomal RNA large subunit methyltransferase E (200 aa).

Residues glycine 51, tryptophan 53, aspartate 71, aspartate 90, and aspartate 112 each coordinate S-adenosyl-L-methionine. The active-site Proton acceptor is lysine 151.

The protein belongs to the class I-like SAM-binding methyltransferase superfamily. RNA methyltransferase RlmE family.

It is found in the cytoplasm. The enzyme catalyses uridine(2552) in 23S rRNA + S-adenosyl-L-methionine = 2'-O-methyluridine(2552) in 23S rRNA + S-adenosyl-L-homocysteine + H(+). Its function is as follows. Specifically methylates the uridine in position 2552 of 23S rRNA at the 2'-O position of the ribose in the fully assembled 50S ribosomal subunit. The polypeptide is Ribosomal RNA large subunit methyltransferase E (Treponema pallidum (strain Nichols)).